The sequence spans 216 residues: V-type ATP synthase subunit D (216 aa).

It belongs to the V-ATPase D subunit family.

Its function is as follows. Produces ATP from ADP in the presence of a proton gradient across the membrane. The sequence is that of V-type ATP synthase subunit D from Clostridium botulinum (strain Loch Maree / Type A3).